The following is a 294-amino-acid chain: MGCGHSRLSCCKPPKKRRQRPDQPPKPEPQELGPLNGDTATTDHVCASEEAEQHQKAITRILQQHEEDKKKWAQQVEKERELELGEKLNEQRKVLEGEHVEALRVLQASYEQDKEALTHSFQEAKAALQETIDRLTAQIEAFQAKMKRAEESILSRDYKKHIQEHGSLSQFWEQELESLHFVIEMKNERIHELDKRLILMETVKEKNLLLEEKITTLQQENEDLHARGRNQMVVSRQLSEDLLLAREALEKESQSRRQLQQEKEELLYRVLGADAAPAFPLASVTPTEVSFLAT.

The disordered stretch occupies residues 1-43; it reads MGCGHSRLSCCKPPKKRRQRPDQPPKPEPQELGPLNGDTATTD. A lipid anchor (N-myristoyl glycine) is attached at glycine 2. The segment covering 20 to 29 has biased composition (basic and acidic residues); it reads RPDQPPKPEP. Residues 47-270 adopt a coiled-coil conformation; the sequence is ASEEAEQHQK…QEKEELLYRV (224 aa). A phosphoserine mark is found at serine 152 and serine 239.

Belongs to the CCDC69 family.

Its subcellular location is the cytoplasm. It is found in the cytoskeleton. The protein localises to the spindle. The protein resides in the midbody. Its function is as follows. May act as a scaffold to regulate the recruitment and assembly of spindle midzone components. Required for the localization of AURKB and PLK1 to the spindle midzone. The protein is Coiled-coil domain-containing protein 69 (CCDC69) of Bos taurus (Bovine).